Here is a 443-residue protein sequence, read N- to C-terminus: MKIGIINTKIRTVFSAFACMIAASLVCTMPARAVVEININKGVIEPLPIAITDFLSADQLGSNITSVIAADLERSGLFAPIDTGAFIEKISNPDAAPRFEDWKVINAQALVTGRITKQPDGRLKAEFRLWDTFGGQQMIGQQFFTTPDNWRRVAHIIADAIYERLTGDKGYFDTRVVFVDESGPAQKRVKRLAIMDQDGANVRFISDGRALSLTPRFSPNRQEVTYMSFEGGSPKVYLLQLETGQRELVGNFPGMTIAPRFSPDGQKVVMSLLQDDGSANIYTMDLRNRTTTRLTSSQAIDTGASYSPDGSQIVFTSDRGGRPQLYVMGADGSNPRRISMGDGSYSTPVWSPRGDLIAFTKQSQGQFSIGVMKTDGSGERLLTSGFHNEGPTWAPNGRVLMFFRKAAGAGGPKLFTIDLTGRNERQIQTPNFASDPAWSPLLE.

An N-terminal signal peptide occupies residues 1 to 33; that stretch reads MKIGIINTKIRTVFSAFACMIAASLVCTMPARA.

The protein belongs to the TolB family. The Tol-Pal system is composed of five core proteins: the inner membrane proteins TolA, TolQ and TolR, the periplasmic protein TolB and the outer membrane protein Pal. They form a network linking the inner and outer membranes and the peptidoglycan layer.

It is found in the periplasm. Functionally, part of the Tol-Pal system, which plays a role in outer membrane invagination during cell division and is important for maintaining outer membrane integrity. In Brucella melitensis biotype 1 (strain ATCC 23456 / CCUG 17765 / NCTC 10094 / 16M), this protein is Tol-Pal system protein TolB.